The sequence spans 495 residues: Carbohydrate oxidase (495 aa).

An N-terminal signal peptide occupies residues 1–22 (MRSAFILALGLITASADALVTR). Residues 55–229 (LPYIPTAIAQ…AVWKLATFPA (175 aa)) form the FAD-binding PCMH-type domain. A cross-link (6-(S-cysteinyl)-8alpha-(pros-histidyl)-FAD (His-Cys)) is located at residues 92–154 (HSYASFGFGG…YGRAISHGTC (63 aa)). N-linked (GlcNAc...) asparagine glycosylation is found at N244 and N417.

Belongs to the oxygen-dependent FAD-linked oxidoreductase family. FAD serves as cofactor. Post-translationally, the FAD cofactor is bound via a bicovalent 6-S-cysteinyl, 8alpha-N1-histidyl FAD linkage.

It is found in the secreted. It carries out the reaction beta-D-glucose + O2 = D-glucono-1,5-lactone + H2O2. The enzyme catalyses D-galactose + O2 = D-galactono-1,5-lactone + H2O2. The catalysed reaction is D-cellobiose + O2 = D-cellobiono-1,5-lactone + H2O2. It catalyses the reaction beta-lactose + O2 = lactobiono-1,5-lactone + H2O2. It carries out the reaction D-maltose + O2 = D-maltobiono-1,5-lactone + H2O2. The enzyme catalyses D-xylose + O2 = D-xylono-1,5-lactone + H2O2. Functionally, catalyzes the selective oxidation of C1 hydroxyl moieties on mono-, oligo- and polysaccharides with concomitant reduction of molecular oxygen to hydrogen peroxide. This results in the formation of the corresponding lactones, which typically undergo spontaneous hydrolysis. Carbohydrate oxidase is able to oxidize a variety of substrates including D-glucose, D-galactose, D-xylose, D-maltose, D-cellobiose, and lactose. In addition, among various oligosaccharides, the enzyme preferred tetrameric dextrins, indicating a favorable interaction of four linked glucose units with the substrate binding pocket. This chain is Carbohydrate oxidase, found in Microdochium nivale (Pink snow mold).